The primary structure comprises 369 residues: uncharacterized protein (369 aa).

To A.pernix APE1276 and APE1804.

This is an uncharacterized protein from Saccharolobus solfataricus (strain ATCC 35092 / DSM 1617 / JCM 11322 / P2) (Sulfolobus solfataricus).